We begin with the raw amino-acid sequence, 81 residues long: Photosystem I iron-sulfur center (81 aa).

4Fe-4S ferredoxin-type domains lie at 2–31 and 39–68; these read AHSV…MVPW and IASA…VRVY. [4Fe-4S] cluster contacts are provided by cysteine 11, cysteine 14, cysteine 17, cysteine 21, cysteine 48, cysteine 51, cysteine 54, and cysteine 58.

In terms of assembly, the eukaryotic PSI reaction center is composed of at least 11 subunits. The cofactor is [4Fe-4S] cluster.

Its subcellular location is the plastid. The protein localises to the chloroplast thylakoid membrane. It carries out the reaction reduced [plastocyanin] + hnu + oxidized [2Fe-2S]-[ferredoxin] = oxidized [plastocyanin] + reduced [2Fe-2S]-[ferredoxin]. In terms of biological role, apoprotein for the two 4Fe-4S centers FA and FB of photosystem I (PSI); essential for photochemical activity. FB is the terminal electron acceptor of PSI, donating electrons to ferredoxin. The C-terminus interacts with PsaA/B/D and helps assemble the protein into the PSI complex. Required for binding of PsaD and PsaE to PSI. PSI is a plastocyanin-ferredoxin oxidoreductase, converting photonic excitation into a charge separation, which transfers an electron from the donor P700 chlorophyll pair to the spectroscopically characterized acceptors A0, A1, FX, FA and FB in turn. In Chlorokybus atmophyticus (Soil alga), this protein is Photosystem I iron-sulfur center.